Reading from the N-terminus, the 559-residue chain is Germacrene A synthase (559 aa).

Aspartate 312, aspartate 316, aspartate 456, threonine 460, and glutamate 464 together coordinate Mg(2+). The DDXXD motif signature appears at 312 to 316 (DDTYD).

It belongs to the terpene synthase family. In terms of assembly, monomer. Requires Mg(2+) as cofactor. Expressed in glandular trichomes of all aerial tissues, with highest levels in tissues accumulating parthenolide (e.g. flowers and, to some extent, leaves).

The enzyme catalyses (2E,6E)-farnesyl diphosphate = (+)-(R)-germacrene A + diphosphate. The protein operates within secondary metabolite biosynthesis; terpenoid biosynthesis. Sesquiterpene synthase involved in germacrene A biosynthesis. Germacrene A is a precursor of several sesquiterpene lactones. The protein is Germacrene A synthase of Tanacetum parthenium (Feverfew).